A 62-amino-acid polypeptide reads, in one-letter code: Large ribosomal subunit protein eL24 (62 aa).

Residues C6, C9, C32, and C36 each contribute to the Zn(2+) site. A C4-type zinc finger spans residues 6–36; it reads CSFCEGTIEPGCGKKYVKKDGSVMHFCSSKC.

Belongs to the eukaryotic ribosomal protein eL24 family. Part of the 50S ribosomal subunit. Forms a cluster with proteins L3 and L14. Zn(2+) serves as cofactor.

Binds to the 23S rRNA. The polypeptide is Large ribosomal subunit protein eL24 (Methanococcus maripaludis (strain C5 / ATCC BAA-1333)).